We begin with the raw amino-acid sequence, 451 residues long: uncharacterized protein (451 aa).

Disordered regions lie at residues 89–150 and 164–222; these read PRLS…ISRY and QVGE…KTFG. The segment covering 104–121 has biased composition (polar residues); sequence QKPTISRESFVWESSASI. Residues 137 to 147 show a composition bias toward low complexity; sequence SSTPSIEPESI. Residues 175 to 222 show a composition bias toward basic and acidic residues; that stretch reads RAADSENERRPSEVREAPESRRRRETSETGSDKSKAPPPIKEIKKTFG. The chain crosses the membrane as a helical span at residues 358 to 376; that stretch reads LIGLMLFQTTIFIISKIIA. The interval 401-451 is disordered; it reads RNGSSSGFASGTSSPLVFIPRTKRPSLVPSEKKMRGPSVTRDLAAEQERDA. Low complexity predominate over residues 403 to 414; the sequence is GSSSGFASGTSS.

Belongs to the IIV-6 067R family.

It localises to the membrane. This is an uncharacterized protein from Invertebrate iridescent virus 3 (IIV-3).